The primary structure comprises 417 residues: Serine hydroxymethyltransferase (417 aa).

(6S)-5,6,7,8-tetrahydrofolate-binding positions include leucine 121 and 125–127 (GHL). Residue lysine 229 is modified to N6-(pyridoxal phosphate)lysine. A (6S)-5,6,7,8-tetrahydrofolate-binding site is contributed by 355–357 (SPF).

Belongs to the SHMT family. As to quaternary structure, homodimer. The cofactor is pyridoxal 5'-phosphate.

Its subcellular location is the cytoplasm. The catalysed reaction is (6R)-5,10-methylene-5,6,7,8-tetrahydrofolate + glycine + H2O = (6S)-5,6,7,8-tetrahydrofolate + L-serine. It functions in the pathway one-carbon metabolism; tetrahydrofolate interconversion. The protein operates within amino-acid biosynthesis; glycine biosynthesis; glycine from L-serine: step 1/1. In terms of biological role, catalyzes the reversible interconversion of serine and glycine with tetrahydrofolate (THF) serving as the one-carbon carrier. This reaction serves as the major source of one-carbon groups required for the biosynthesis of purines, thymidylate, methionine, and other important biomolecules. Also exhibits THF-independent aldolase activity toward beta-hydroxyamino acids, producing glycine and aldehydes, via a retro-aldol mechanism. The sequence is that of Serine hydroxymethyltransferase from Shewanella putrefaciens (strain CN-32 / ATCC BAA-453).